The primary structure comprises 420 residues: Gamma-glutamyl phosphate reductase (420 aa).

It belongs to the gamma-glutamyl phosphate reductase family.

Its subcellular location is the cytoplasm. The enzyme catalyses L-glutamate 5-semialdehyde + phosphate + NADP(+) = L-glutamyl 5-phosphate + NADPH + H(+). The protein operates within amino-acid biosynthesis; L-proline biosynthesis; L-glutamate 5-semialdehyde from L-glutamate: step 2/2. Its function is as follows. Catalyzes the NADPH-dependent reduction of L-glutamate 5-phosphate into L-glutamate 5-semialdehyde and phosphate. The product spontaneously undergoes cyclization to form 1-pyrroline-5-carboxylate. The protein is Gamma-glutamyl phosphate reductase of Streptococcus pneumoniae (strain ATCC 700669 / Spain 23F-1).